A 278-amino-acid chain; its full sequence is Phosphatidylglycerol--prolipoprotein diacylglyceryl transferase (278 aa).

Helical transmembrane passes span 19 to 39 (WYGI…INEG), 49 to 69 (FIDF…IYYV), 83 to 103 (IIAI…GLIV), and 112 to 132 (MLPP…AQVI). Arg-134 contributes to the a 1,2-diacyl-sn-glycero-3-phospho-(1'-sn-glycerol) binding site. Helical transmembrane passes span 174–194 (QPTY…ILSL), 204–224 (GEVF…VEGM), and 235–255 (IRVS…LWVY).

Belongs to the Lgt family.

The protein resides in the cell membrane. It catalyses the reaction L-cysteinyl-[prolipoprotein] + a 1,2-diacyl-sn-glycero-3-phospho-(1'-sn-glycerol) = an S-1,2-diacyl-sn-glyceryl-L-cysteinyl-[prolipoprotein] + sn-glycerol 1-phosphate + H(+). It functions in the pathway protein modification; lipoprotein biosynthesis (diacylglyceryl transfer). Catalyzes the transfer of the diacylglyceryl group from phosphatidylglycerol to the sulfhydryl group of the N-terminal cysteine of a prolipoprotein, the first step in the formation of mature lipoproteins. The sequence is that of Phosphatidylglycerol--prolipoprotein diacylglyceryl transferase from Lactobacillus gasseri (strain ATCC 33323 / DSM 20243 / BCRC 14619 / CIP 102991 / JCM 1131 / KCTC 3163 / NCIMB 11718 / NCTC 13722 / AM63).